The chain runs to 1442 residues: Clustered mitochondria protein homolog (1442 aa).

Disordered regions lie at residues 38–100 (NYRN…KKPD) and 237–258 (GRSE…KDRP). A compositionally biased stretch (basic and acidic residues) spans 82–100 (SEGEQQKDKTAAEDKKKPD). The region spanning 394–636 (RAEDTFSSKL…RTFPPDVNFL (243 aa)) is the Clu domain. 2 stretches are compositionally biased toward basic and acidic residues: residues 696–714 (QKQE…EPKA) and 737–763 (ESKE…KVET). 2 disordered regions span residues 696 to 763 (QKQE…KVET) and 949 to 984 (SESD…SFQC). Residues 949 to 958 (SESDALTKSG) show a composition bias toward polar residues. TPR repeat units follow at residues 1087–1120 (AYNF…LNNV), 1213–1246 (ALLD…NIKY), and 1248–1281 (GEKS…EKET). A disordered region spans residues 1373 to 1442 (RQKEGGTSEQ…SSNASAQQVS (70 aa)). Residues 1380–1390 (SEQAAAAQASQ) are compositionally biased toward low complexity. Positions 1424–1442 (ASSSKQADNSSNASAQQVS) are enriched in polar residues.

The protein belongs to the CLU family.

The protein localises to the cytoplasm. In terms of biological role, mRNA-binding protein involved in proper cytoplasmic distribution of mitochondria. The polypeptide is Clustered mitochondria protein homolog (Aedes aegypti (Yellowfever mosquito)).